The following is a 386-amino-acid chain: S-(hydroxymethyl)glutathione dehydrogenase (386 aa).

Residue serine 2 is modified to N-acetylserine. Cysteine 49 lines the Zn(2+) pocket. Histidine 50 is a binding site for NAD(+). Positions 71, 72, 101, 104, 107, 115, and 179 each coordinate Zn(2+). NAD(+)-binding positions include 204 to 209 (GCGTVG), aspartate 228, 300 to 302 (IGV), and 325 to 327 (SAF).

This sequence belongs to the zinc-containing alcohol dehydrogenase family. Class-III subfamily. The cofactor is Zn(2+).

The protein resides in the cytoplasm. The protein localises to the mitochondrion. The enzyme catalyses a primary alcohol + NAD(+) = an aldehyde + NADH + H(+). It catalyses the reaction a secondary alcohol + NAD(+) = a ketone + NADH + H(+). It carries out the reaction S-(hydroxymethyl)glutathione + NADP(+) = S-formylglutathione + NADPH + H(+). The catalysed reaction is S-(hydroxymethyl)glutathione + NAD(+) = S-formylglutathione + NADH + H(+). The enzyme catalyses S-nitrosoglutathione + NADH + H(+) = S-(hydroxysulfenamide)glutathione + NAD(+). Oxidizes long-chain alcohols and, in the presence of glutathione, is able to oxidize formaldehyde. Is responsible for yeast resistance to formaldehyde. Also acts as a S-nitroso-glutathione reductase by catalyzing the NADH-dependent reduction of S-nitrosoglutathione, thereby regulating protein S-nitrosylation. This chain is S-(hydroxymethyl)glutathione dehydrogenase (SFA1), found in Saccharomyces cerevisiae (strain ATCC 204508 / S288c) (Baker's yeast).